The primary structure comprises 378 residues: Alginate lyase (378 aa).

The N-terminal stretch at 1–28 (MQTPKLIRPTLLSMAIVSSMAWATGASA) is a signal peptide. Substrate contacts are provided by residues 67-68 (SK), 140-141 (HT), and Tyr258.

Belongs to the polysaccharide lyase 5 family.

It localises to the periplasm. The enzyme catalyses Eliminative cleavage of alginate to give oligosaccharides with 4-deoxy-alpha-L-erythro-hex-4-enuronosyl groups at their non-reducing ends and beta-D-mannuronate at their reducing end.. Functionally, catalyzes the depolymerization of alginate by cleaving the beta-1,4 glycosidic bond between two adjacent sugar residues via a beta-elimination mechanism. May serve to degrade mislocalized alginate that is trapped in the periplasmic space. This chain is Alginate lyase, found in Pseudomonas syringae pv. tomato (strain ATCC BAA-871 / DC3000).